Consider the following 1156-residue polypeptide: Protein hu-li tai shao (1156 aa).

The disordered stretch occupies residues 1 to 36 (MTEVEQPPQNGIDPTAGEDDDNSKARPADIEQDMRE). Residues 22-36 (NSKARPADIEQDMRE) are compositionally biased toward basic and acidic residues. Serine 478 is subject to Phosphoserine. Phosphothreonine occurs at positions 480 and 498. Serine 603 is modified (phosphoserine). Position 608 is a phosphotyrosine (tyrosine 608). 2 positions are modified to phosphothreonine: threonine 609 and threonine 611. Residue serine 614 is modified to Phosphoserine. Tyrosine 627 is subject to Phosphotyrosine. Serine 630 is modified (phosphoserine). The disordered stretch occupies residues 897-956 (FLPSNHALPKDTDANNRDQTDRERPEAEQEESFHCAGDSGIGDSTGRRPRLATTSNDSSI). Residues 904–929 (LPKDTDANNRDQTDRERPEAEQEESF) show a composition bias toward basic and acidic residues.

Belongs to the aldolase class II family. Adducin subfamily. In terms of tissue distribution, isoform C is expressed in nurse cells. Isoform A is produced in the nurse cell but transported into the oocyte at stage 1, localizes to the oocyte cortex at stage 8 and to the anterior pole from day 9 onwards. Isoform B is expressed in the somatic follicle cells that surround the germline.

It is found in the cytoplasm. Its subcellular location is the cytoskeleton. The protein localises to the cell membrane. Its function is as follows. Required for assembling actin at ring canals in developing egg chambers. Probably interacts with other developmental proteins involved in nurse cell/oocyte transport through the ring canals. Important for normal neuromotor function. The chain is Protein hu-li tai shao (hts) from Drosophila melanogaster (Fruit fly).